Here is a 58-residue protein sequence, read N- to C-terminus: Large ribosomal subunit protein uL30 (58 aa).

This sequence belongs to the universal ribosomal protein uL30 family. Part of the 50S ribosomal subunit.

In Acinetobacter baylyi (strain ATCC 33305 / BD413 / ADP1), this protein is Large ribosomal subunit protein uL30.